A 349-amino-acid chain; its full sequence is MGQEEELLRIAKKLEKMVARKKTEGALDLLKKLGSWQMSIQLLQTTRIGVAVNGVRKHCSNKEVVALAKVLIRNWKQLLDSPATPKGEKGEERVKAKKKEKGLDCSDWKPETSLSPPRKKRVEEPKDRRDSVDSKSSATSSPKRPSMERSNSSKSKAETPRTPSSPSSPTFAPSVCLLAPCYLTGDSVRDKCVEMLSAALKADDDYKDYGVNCDKMASEIEDHIYQELKSTDMKYRNRVRSRISNLKDPRNPGLRRNVLSGAISAGLIAKMTAEEMASDELRELRNAMTQEAIREHQMAKTGGTTTDLFQCSKCKKKNCTYNQVQTRSADEPMTTFVLCNECGNRWKFC.

Residues 5–82 (EELLRIAKKL…RNWKQLLDSP (78 aa)) enclose the TFIIS N-terminal domain. The tract at residues 80-170 (DSPATPKGEK…RTPSSPSSPT (91 aa)) is disordered. The span at 101-110 (KGLDCSDWKP) shows a compositional bias: basic and acidic residues. Ser115 carries the phosphoserine modification. Basic and acidic residues predominate over residues 121–133 (RVEEPKDRRDSVD). Composition is skewed to low complexity over residues 134–144 (SKSSATSSPKR) and 160–170 (PRTPSSPSSPT). Ser141 carries the post-translational modification Phosphoserine. A TFIIS central domain is found at 188–304 (VRDKCVEMLS…EHQMAKTGGT (117 aa)). The TFIIS-type zinc finger occupies 307-347 (DLFQCSKCKKKNCTYNQVQTRSADEPMTTFVLCNECGNRWK). Positions 311, 314, 339, and 342 each coordinate Zn(2+).

The protein belongs to the TFS-II family.

Its subcellular location is the nucleus. Its function is as follows. Necessary for efficient RNA polymerase II transcription elongation past template-encoded arresting sites. The arresting sites in DNA have the property of trapping a certain fraction of elongating RNA polymerases that pass through, resulting in locked ternary complexes. Cleavage of the nascent transcript by S-II allows the resumption of elongation from the new 3'-terminus. This is Transcription elongation factor A protein 3 (TCEA3) from Bos taurus (Bovine).